Consider the following 366-residue polypeptide: Chalcone synthase B (366 aa).

Residue C172 is part of the active site.

This sequence belongs to the thiolase-like superfamily. Chalcone/stilbene synthases family.

It carries out the reaction (E)-4-coumaroyl-CoA + 3 malonyl-CoA + 3 H(+) = 2',4,4',6'-tetrahydroxychalcone + 3 CO2 + 4 CoA. It participates in secondary metabolite biosynthesis; flavonoid biosynthesis. In terms of biological role, the primary product of this enzyme is 4,2',4',6'-tetrahydroxychalcone (also termed naringenin-chalcone or chalcone) which can under specific conditions spontaneously isomerize into naringenin. This chain is Chalcone synthase B (CHSB), found in Ipomoea trifida (Morning glory).